Reading from the N-terminus, the 808-residue chain is Probable inorganic carbon transporter subunit DabA (808 aa).

4 residues coordinate Zn(2+): Cys-335, Asp-337, His-497, and Cys-512.

It belongs to the inorganic carbon transporter (TC 9.A.2) DabA family. As to quaternary structure, forms a complex with DabB. The cofactor is Zn(2+).

It is found in the cell inner membrane. Part of an energy-coupled inorganic carbon pump. The protein is Probable inorganic carbon transporter subunit DabA of Rhodopseudomonas palustris (strain TIE-1).